Consider the following 474-residue polypeptide: Aspartyl/glutamyl-tRNA(Asn/Gln) amidotransferase subunit B (474 aa).

The protein belongs to the GatB/GatE family. GatB subfamily. As to quaternary structure, heterotrimer of A, B and C subunits.

The catalysed reaction is L-glutamyl-tRNA(Gln) + L-glutamine + ATP + H2O = L-glutaminyl-tRNA(Gln) + L-glutamate + ADP + phosphate + H(+). It carries out the reaction L-aspartyl-tRNA(Asn) + L-glutamine + ATP + H2O = L-asparaginyl-tRNA(Asn) + L-glutamate + ADP + phosphate + 2 H(+). In terms of biological role, allows the formation of correctly charged Asn-tRNA(Asn) or Gln-tRNA(Gln) through the transamidation of misacylated Asp-tRNA(Asn) or Glu-tRNA(Gln) in organisms which lack either or both of asparaginyl-tRNA or glutaminyl-tRNA synthetases. The reaction takes place in the presence of glutamine and ATP through an activated phospho-Asp-tRNA(Asn) or phospho-Glu-tRNA(Gln). The polypeptide is Aspartyl/glutamyl-tRNA(Asn/Gln) amidotransferase subunit B (Coprothermobacter proteolyticus (strain ATCC 35245 / DSM 5265 / OCM 4 / BT)).